The chain runs to 497 residues: E3 ubiquitin-protein ligase CBL-C (497 aa).

The tract at residues 7–145 is 4H; the sequence is PQGWQWGEPR…SALFPEGKYC (139 aa). The Cbl-PTB domain occupies 7–321; the sequence is PQGWQWGEPR…GKNHNPDLTE (315 aa). The EF-hand-like stretch occupies residues 146–218; it reads GHLYQITKGS…FEFDIFTRLF (73 aa). Residues Asp199, Thr201, and Glu210 each contribute to the Ca(2+) site. Residues 219 to 321 are SH2-like; the sequence is QPWPTLLKNW…GKNHNPDLTE (103 aa). Arg264 provides a ligand contact to 4-O-phospho-L-tyrosine. The tract at residues 322 to 350 is linker; sequence LCRAVLNQCIQVSQEQLQLYQAMNSTFEL. Phosphotyrosine; by SRC is present on Tyr341. An RING-type zinc finger spans residues 351–390; that stretch reads CKICTERDKDVRIEPCGHLLCSCCLAAWQHSDSQTCPFCR. The segment at 351 to 497 is interaction with RET; that stretch reads CKICTERDKD…QVREGATESS (147 aa).

Interacts with Ubiquitin-conjugating enzyme E2 UBE2D2 and UBE2D3. Interacts with EGFR (tyrosine phosphorylated). Interacts with the SH3 domain proteins LYN and CRK. Interacts (via RING-type zinc finger) with TGFB1I1 (via LIM zinc-binding domain 2); the interaction is direct and enhances the E3 activity. Interacts directly with RET (inactive) and CD2AP; dissociates from RET upon RET activation by GDNF which also increases the interaction with CD2AP suggesting dissociation as CBLC:CD2AP complex. Interacts with SRC; the interaction is enhanced when SRC is phosphorylated at 'Tyr-419'. Phosphorylated on multiple tyrosine residues by SRC. Post-translationally, autoubiquitinated, when phosphorylated at Tyr-341.

The catalysed reaction is S-ubiquitinyl-[E2 ubiquitin-conjugating enzyme]-L-cysteine + [acceptor protein]-L-lysine = [E2 ubiquitin-conjugating enzyme]-L-cysteine + N(6)-ubiquitinyl-[acceptor protein]-L-lysine.. Phosphorylation at Tyr-341 is necessary and sufficient for the activation of E3 activity. In terms of biological role, acts as an E3 ubiquitin-protein ligase, which accepts ubiquitin from specific E2 ubiquitin-conjugating enzymes, and then transfers it to substrates promoting their degradation by the proteasome. Functionally coupled with the E2 ubiquitin-protein ligases UB2D1, UB2D2 and UB2D3. Regulator of EGFR mediated signal transduction; upon EGF activation, ubiquitinates EGFR. Inhibits EGF stimulated MAPK1 activation. Promotes ubiquitination of SRC phosphorylated at 'Tyr-419', has the highest ubiquitin ligase activity among CBL family proteins. In collaboration with CD2AP may act as regulatory checkpoint for Ret signaling by modulating the rate of RET degradation after ligand activation; CD2AP converts it from an inhibitor to a promoter of RET degradation; the function limits the potency of GDNF on neuronal survival. The sequence is that of E3 ubiquitin-protein ligase CBL-C (Cblc) from Rattus norvegicus (Rat).